The chain runs to 260 residues: tRNA (guanine-N(1)-)-methyltransferase (260 aa).

S-adenosyl-L-methionine contacts are provided by residues G117 and 137–142; that span reads LGDFVL.

This sequence belongs to the RNA methyltransferase TrmD family. As to quaternary structure, homodimer.

It localises to the cytoplasm. The catalysed reaction is guanosine(37) in tRNA + S-adenosyl-L-methionine = N(1)-methylguanosine(37) in tRNA + S-adenosyl-L-homocysteine + H(+). In terms of biological role, specifically methylates guanosine-37 in various tRNAs. This chain is tRNA (guanine-N(1)-)-methyltransferase, found in Cupriavidus necator (strain ATCC 17699 / DSM 428 / KCTC 22496 / NCIMB 10442 / H16 / Stanier 337) (Ralstonia eutropha).